The primary structure comprises 219 residues: Sugar transporter SWEET1 (219 aa).

Transmembrane regions (helical) follow at residues 3–23, 38–58, 63–83, 98–118, 125–145, 156–176, and 189–209; these read FLQL…TTGL, VQFL…YYGL, GTVI…IATY, LLMV…ISPG, LGLT…ADLL, LSFS…LYGL, and PGIF…AVIP. Positions 5–90 constitute a MtN3/slv 1 domain; it reads QLLSCACIIF…ATYCHYTKEK (86 aa). Positions 124–204 constitute a MtN3/slv 2 domain; it reads QLGLTCSVFT…LIRFFLFWWF (81 aa).

This sequence belongs to the SWEET sugar transporter family.

It localises to the golgi apparatus membrane. Its subcellular location is the cell membrane. Mediates sugar transport across membranes. In Danio rerio (Zebrafish), this protein is Sugar transporter SWEET1 (slc50a1).